The sequence spans 842 residues: Protein translocase subunit SecA (842 aa).

Residues Gln85, 103–107 (GEGKT), and Asp493 contribute to the ATP site. Zn(2+) contacts are provided by Cys825, Cys827, Cys836, and His837.

It belongs to the SecA family. In terms of assembly, monomer and homodimer. Part of the essential Sec protein translocation apparatus which comprises SecA, SecYEG and auxiliary proteins SecDF. Other proteins may also be involved. Zn(2+) serves as cofactor.

It localises to the cell membrane. The protein localises to the cytoplasm. It catalyses the reaction ATP + H2O + cellular proteinSide 1 = ADP + phosphate + cellular proteinSide 2.. Its function is as follows. Part of the Sec protein translocase complex. Interacts with the SecYEG preprotein conducting channel. Has a central role in coupling the hydrolysis of ATP to the transfer of proteins into and across the cell membrane, serving as an ATP-driven molecular motor driving the stepwise translocation of polypeptide chains across the membrane. In Streptococcus equi subsp. equi (strain 4047), this protein is Protein translocase subunit SecA.